The primary structure comprises 431 residues: MSTIIDVYAREVLDSRGNPTVEVEVYTESGAFGRAIVPSGASTGEHEAVELRDGDKSRYLGKGVVNAVNNVNEIIAPEIVGFDVTDQAGIDRAMIELDGTPNKGKLGANAILGVSMAVAHAAADFVGLPLYRYLGGFNAKQLPTPMMNIINGGSHADNNVDFQEFMILPVGAPTFKESIRMGAEVFHALKAVLHDKGLNTAVGDEGGFAPNLGSNREALEVIIEAIEKAGYKAGENVFLGMDVASSEFYNKETGKYDLAGEGRTGLTSAEMVDFYEELCKDFPIISIEDGLDENDWDGHKLLTERLGSKVQLVGDDLFVTNTQKLAEGIEKGISNSILIKVNQIGTLTETFEAIEMAKRAGYTAVVSHRSGETEDATIADIAVATNAGQIKTGSMSRTDRIAKYNQLLRIEDELGEIAVYDGIKSFYNIKR.

Gln163 is a (2R)-2-phosphoglycerate binding site. Glu205 (proton donor) is an active-site residue. Asp242, Glu288, and Asp315 together coordinate Mg(2+). (2R)-2-phosphoglycerate contacts are provided by Lys340, Arg369, Ser370, and Lys391. Residue Lys340 is the Proton acceptor of the active site.

It belongs to the enolase family. It depends on Mg(2+) as a cofactor.

The protein resides in the cytoplasm. It localises to the secreted. The protein localises to the cell surface. It catalyses the reaction (2R)-2-phosphoglycerate = phosphoenolpyruvate + H2O. It participates in carbohydrate degradation; glycolysis; pyruvate from D-glyceraldehyde 3-phosphate: step 4/5. Catalyzes the reversible conversion of 2-phosphoglycerate (2-PG) into phosphoenolpyruvate (PEP). It is essential for the degradation of carbohydrates via glycolysis. This is Enolase from Bacillus cereus (strain AH187).